The primary structure comprises 1040 residues: Multidrug resistance protein MdtB (1040 aa).

12 consecutive transmembrane segments (helical) span residues 25-45 (LLMV…PVSA), 347-367 (LMMA…NIPA), 369-389 (IIPG…MVFL), 396-416 (LTLM…IVVI), 440-460 (IGFT…PLLF), 472-492 (FAIT…TLTP), 537-557 (WLTL…WVFI), 863-883 (LGST…VLGI), 888-908 (FIHP…ALLA), 911-931 (IAGS…IGIV), 968-988 (ILMT…STGV), and 998-1018 (IGMV…TPVI).

It belongs to the resistance-nodulation-cell division (RND) (TC 2.A.6) family. MdtB subfamily. In terms of assembly, part of a tripartite efflux system composed of MdtA, MdtB and MdtC. MdtB forms a heteromultimer with MdtC.

It is found in the cell inner membrane. The MdtABC tripartite complex confers resistance against novobiocin and deoxycholate. The chain is Multidrug resistance protein MdtB from Escherichia coli O127:H6 (strain E2348/69 / EPEC).